The sequence spans 461 residues: Metacaspase-1 (461 aa).

Gly residues-rich tracts occupy residues 1 to 21 (MSYP…GYGG), 45 to 66 (QYGG…GYGP), 74 to 86 (QYGG…GYGP), and 105 to 119 (PGGQ…GHPG). Positions 1–154 (MSYPGQGGNT…PQGNQAFGGT (154 aa)) are disordered. Composition is skewed to low complexity over residues 121-131 (GNQAPPGQYGQ) and 138-148 (HGNHNMPPQGN). Catalysis depends on residues H252 and C308.

It belongs to the peptidase C14B family.

In terms of biological role, involved in cell death (apoptosis). This is Metacaspase-1 (MCA1) from Yarrowia lipolytica (strain CLIB 122 / E 150) (Yeast).